Consider the following 897-residue polypeptide: MPEQDKDPRVQENPDDQRTVPEVTGDARSAFWPLRDNGGPSPFVPRPGPLQTDLHAQSSEIRYNHTSQTSWTSSSTKRNAISSSYSSTGGLPGLKQRRGPASSRCQLTLSYSKTVSEDRPQAVSSGHTRCEKGADTAPGQTIAPTGGSPRSQDSRPRRRKIPLLPRRRGEPLMLPPPLELGYRVTAEDLHLEKETAFQRINSALHVEDKAIPDCRPSRPSHTLSSLATGASGGPPVSKAPTMDAQQDRPKSQDSLGLLAPLASAAEVPSTAPVSGKKHRPPGPLFSSSDPLPATSYHSRDTAQVTSLIPATFTAASRDAGMRRTRSAPAAATAAPPPSTLNNTSGSLLNAVDGGPSHFLASATAAARAQRSEVRYNQRSQTSRTRSCLKRNASSSSSSHSSTEGLQELKRRRGPASSHCQLAHSSSNTVSEDGPQAVSSGHRCENKAGTAPGQTLAPRGGSPRSQASRPHINSALYVEDKAISDCRPSRPSHTLSSLATGASGGPPVSKAPTMDAQQDRPKSQDCLGLVAPLASAAEVPSTAPVSGKKHRPPGPLFSSSDPLPATSSHSRDSAQVTSLIPATFTAASRDAGMRRTRPGTSAPAAAAAALPPSTLNPTSGSLLNAVDGGPSHFLASATAAARAQRSEVRYNQRSQTSRTRSCLKRNASSSSHSSTEGLQELKRRRGPASSHCQLAHSSSNTVSEDGPQAVSSGHRCENKAGTAPGQTLAPRGGYPRSQASRPRINSALHVEDKAISDCRPSRPSHTLSSLATGASGGPPVSKAPTMDAQQDRPKSQDCLGLLAPLASAAEVSSTAPVSGKKHRPPGPLFSSSDPLPATSSHSGDSAQDTSLIPAPFTPASRDAGIRRMFRVRNCLRGLGLFLLVFSFFFLLTWASFSF.

Over residues 1–19 (MPEQDKDPRVQENPDDQRT) the composition is skewed to basic and acidic residues. 10 disordered regions span residues 1 to 177 (MPEQ…LPPP), 211 to 252 (IPDC…PKSQ), 266 to 302 (EVPS…RDTA), 315 to 348 (ASRD…GSLL), 362 to 469 (ATAA…ASRP), 484 to 522 (DCRP…RPKS), 536 to 612 (AEVP…LPPS), 642 to 741 (AQRS…ASRP), 753 to 793 (AISD…DRPK), and 812 to 856 (STAP…APFT). The span at 54 to 65 (LHAQSSEIRYNH) shows a compositional bias: polar residues. A compositionally biased stretch (low complexity) spans 66-76 (TSQTSWTSSST). Composition is skewed to polar residues over residues 77 to 89 (KRNA…SSTG), 103 to 114 (SRCQLTLSYSKT), and 219 to 228 (PSHTLSSLAT). Polar residues-rich tracts occupy residues 376–385 (NQRSQTSRTR), 417–430 (SHCQ…NTVS), 490–499 (PSHTLSSLAT), and 556–579 (FSSS…TSLI). Positions 599–612 (TSAPAAAAAALPPS) are enriched in low complexity. Polar residues-rich tracts occupy residues 650 to 676 (NQRS…STEG), 689 to 702 (SHCQ…NTVS), 762 to 771 (PSHTLSSLAT), and 828 to 849 (FSSS…QDTS). Residues 877–897 (LGLFLLVFSFFFLLTWASFSF) traverse the membrane as a helical segment.

Belongs to the POM121 family.

It is found in the membrane. This Homo sapiens (Human) protein is Putative POM121-like protein 1-like.